The sequence spans 1235 residues: ATP-dependent helicase/nuclease subunit A (1235 aa).

The UvrD-like helicase ATP-binding domain maps to 3–471; sequence TKWTETQKSA…IKLSENFRSR (469 aa). 24–31 provides a ligand contact to ATP; it reads AGAGTGKT. The 300-residue stretch at 509–808 folds into the UvrD-like helicase C-terminal domain; that stretch reads PFEGNCGGDV…RIMSIHKSKG (300 aa).

Belongs to the helicase family. AddA subfamily. In terms of assembly, heterodimer of AddA and AddB/RexB. Mg(2+) serves as cofactor.

The enzyme catalyses Couples ATP hydrolysis with the unwinding of duplex DNA by translocating in the 3'-5' direction.. It carries out the reaction ATP + H2O = ADP + phosphate + H(+). In terms of biological role, the heterodimer acts as both an ATP-dependent DNA helicase and an ATP-dependent, dual-direction single-stranded exonuclease. Recognizes the chi site generating a DNA molecule suitable for the initiation of homologous recombination. The AddA nuclease domain is required for chi fragment generation; this subunit has the helicase and 3' -&gt; 5' nuclease activities. The sequence is that of ATP-dependent helicase/nuclease subunit A from Clostridium kluyveri (strain ATCC 8527 / DSM 555 / NBRC 12016 / NCIMB 10680 / K1).